A 120-amino-acid chain; its full sequence is MNTVSVVQFLAVGCAVFVLYGRGVFAAEGVKKAGQHKDAELCLGSDGLGHRLDEFWYNDDMCQRFLCFKDDEGIMYEQIANCPIAIAEGDCTLKPGTKGHYPDCCPAVECPPEDQKEEEI.

A signal peptide spans 1–26 (MNTVSVVQFLAVGCAVFVLYGRGVFA).

It belongs to the scoloptoxin-16 family. Contains 4 disulfide bonds. In terms of tissue distribution, expressed by the venom gland.

It is found in the secreted. The polypeptide is U-scoloptoxin(16)-Er2a (Ethmostigmus rubripes (Giant centipede)).